We begin with the raw amino-acid sequence, 133 residues long: ATP synthase epsilon chain (133 aa).

It belongs to the ATPase epsilon chain family. F-type ATPases have 2 components, CF(1) - the catalytic core - and CF(0) - the membrane proton channel. CF(1) has five subunits: alpha(3), beta(3), gamma(1), delta(1), epsilon(1). CF(0) has three main subunits: a, b and c.

Its subcellular location is the cell membrane. Produces ATP from ADP in the presence of a proton gradient across the membrane. This chain is ATP synthase epsilon chain, found in Lawsonia intracellularis (strain PHE/MN1-00).